The sequence spans 536 residues: Multicopper oxidase terE (536 aa).

The tract at residues 1–21 (MHWHGLSQSTAPFSDGSPQAS) is disordered. Plastocyanin-like domains are found at residues 1-67 (MHWH…VEEK), 79-238 (ERIL…LSYN), and 354-488 (TVQK…VWMM). Cu cation is bound by residues His2, His4, His48, and His50. His397 is a binding site for Cu cation.

Belongs to the multicopper oxidase family.

The protein operates within secondary metabolite biosynthesis. Its function is as follows. Multicopper oxidase; part of the gene cluster that mediates the biosynthesis of terrein, a fungal metabolite with ecological, antimicrobial, antiproliferative, and antioxidative activities. The first step in the pathway is performed by the polyketide synthase terA that produces 4-hydroxy-6-methylpyranon (4-HMP), orsellinic acid (OA), and 2,3-dehydro-6-hydroxymellein (2,3-dehydro-6-HM) by condensing acetyl-CoA with two, three, or four malonyl-CoA units, respectively. 4-HMP and OA are not pathway intermediates, but are rather shunt or side products. 2,3-dehydro-6-HM is further converted to 6-hydroxymellein (6-HM) by the 6-hydroxymellein synthase terB. The monooxygenases terC and terD, the multicopper oxidase terE and the Kelch-like protein terF are then involved in the transformation of 6-HM to terrein. Even if they are co-regulated with the other terrein cluster genes, terH and terI seem to be dispensable for terrein production; whereas one or both of the 2 transporters terG and terJ are probably required for efficient secretion of metabolites. In Aspergillus terreus (strain NIH 2624 / FGSC A1156), this protein is Multicopper oxidase terE.